Here is a 736-residue protein sequence, read N- to C-terminus: Oligopeptide transporter 6 (736 aa).

15 consecutive transmembrane segments (helical) span residues 43-63, 66-86, 116-136, 148-168, 210-230, 258-278, 288-308, 357-377, 412-432, 443-463, 489-511, 527-547, 602-622, 645-665, and 678-698; these read MWVL…FFWY, MPLS…GHLM, VLIT…HILS, FLPA…WAGL, FFLI…YLFT, LGIG…GSPL, VAIG…WLNI, FFAV…VHVL, VPLW…MFIS, WWGV…IGVI, PVAN…TFIS, FMAQ…TAWW, WFFL…KMFP, ATAV…HFIF, and VLSG…FLAL.

Belongs to the oligopeptide OPT transporter (TC 2.A.67.1) family. In terms of tissue distribution, expressed in flowers and roots, and at a low level in leaves and stems. Detected in the cambial zone of the vascular bundles and in the region of lateral root initiation. Low expression in the vascular network of the petals and high in the stamen filaments and the gynoecium.

The protein resides in the membrane. Functionally, involved in the translocation of tetra- and pentapeptides across the cellular membrane in an energy-dependent manner. Also involved in transport of glutathione derivatives and metal complexes, and may be involved in stress resistance. This chain is Oligopeptide transporter 6 (OPT6), found in Arabidopsis thaliana (Mouse-ear cress).